A 459-amino-acid chain; its full sequence is Chromosomal replication initiator protein DnaA (459 aa).

The interval 1–90 is domain I, interacts with DnaA modulators; it reads MAVSLWQQCI…RPASKPAAPA (90 aa). Residues 75–124 form a disordered region; sequence RFDIGSRPASKPAAPAASTKSPVAPAAKSPSKPSFNSNEPAATANHRSNM. Residues 80 to 108 are compositionally biased toward low complexity; it reads SRPASKPAAPAASTKSPVAPAAKSPSKPS. Residues 91–122 are domain II; the sequence is ASTKSPVAPAAKSPSKPSFNSNEPAATANHRS. Residues 109 to 124 are compositionally biased toward polar residues; it reads FNSNEPAATANHRSNM. Residues 123–339 are domain III, AAA+ region; the sequence is NMNPTYQFDN…GALNRVIANA (217 aa). ATP is bound by residues Gly167, Gly169, Lys170, and Thr171. A domain IV, binds dsDNA region spans residues 340–459; that stretch reads NFTGRPITID…YANLIRTLSS (120 aa).

The protein belongs to the DnaA family. As to quaternary structure, oligomerizes as a right-handed, spiral filament on DNA at oriC.

Its subcellular location is the cytoplasm. Functionally, plays an essential role in the initiation and regulation of chromosomal replication. ATP-DnaA binds to the origin of replication (oriC) to initiate formation of the DNA replication initiation complex once per cell cycle. Binds the DnaA box (a 9 base pair repeat at the origin) and separates the double-stranded (ds)DNA. Forms a right-handed helical filament on oriC DNA; dsDNA binds to the exterior of the filament while single-stranded (ss)DNA is stabiized in the filament's interior. The ATP-DnaA-oriC complex binds and stabilizes one strand of the AT-rich DNA unwinding element (DUE), permitting loading of DNA polymerase. After initiation quickly degrades to an ADP-DnaA complex that is not apt for DNA replication. Binds acidic phospholipids. This Shewanella loihica (strain ATCC BAA-1088 / PV-4) protein is Chromosomal replication initiator protein DnaA.